Here is a 72-residue protein sequence, read N- to C-terminus: Large ribosomal subunit protein uL29 (72 aa).

The protein belongs to the universal ribosomal protein uL29 family.

This chain is Large ribosomal subunit protein uL29 (rpmC), found in Chlamydia muridarum (strain MoPn / Nigg).